A 233-amino-acid chain; its full sequence is Ribose-5-phosphate isomerase A (233 aa).

Substrate is bound by residues S28–T31, D83–D86, and K96–G99. E105 serves as the catalytic Proton acceptor. K123 lines the substrate pocket.

This sequence belongs to the ribose 5-phosphate isomerase family. Homodimer.

The enzyme catalyses aldehydo-D-ribose 5-phosphate = D-ribulose 5-phosphate. It participates in carbohydrate degradation; pentose phosphate pathway; D-ribose 5-phosphate from D-ribulose 5-phosphate (non-oxidative stage): step 1/1. In terms of biological role, catalyzes the reversible conversion of ribose-5-phosphate to ribulose 5-phosphate. In Bartonella bacilliformis (strain ATCC 35685 / KC583 / Herrer 020/F12,63), this protein is Ribose-5-phosphate isomerase A.